The sequence spans 831 residues: Translation initiation factor IF-2 (831 aa).

The tr-type G domain maps to 329–499 (TRAPVVTVMG…LLISEMQDLK (171 aa)). A G1 region spans residues 338–345 (GHVDHGKT). Residue 338-345 (GHVDHGKT) participates in GTP binding. The segment at 363–367 (GITQH) is G2. The tract at residues 385-388 (DTPG) is G3. GTP contacts are provided by residues 385-389 (DTPGH) and 439-442 (NKID). A G4 region spans residues 439–442 (NKID). The segment at 475 to 477 (SAL) is G5.

This sequence belongs to the TRAFAC class translation factor GTPase superfamily. Classic translation factor GTPase family. IF-2 subfamily.

The protein localises to the cytoplasm. Functionally, one of the essential components for the initiation of protein synthesis. Protects formylmethionyl-tRNA from spontaneous hydrolysis and promotes its binding to the 30S ribosomal subunits. Also involved in the hydrolysis of GTP during the formation of the 70S ribosomal complex. The chain is Translation initiation factor IF-2 from Rickettsia typhi (strain ATCC VR-144 / Wilmington).